A 736-amino-acid chain; its full sequence is DNA ligase (736 aa).

Residues 41-45, 91-92, and Glu-125 each bind NAD(+); these read DQEYD and SL. The active-site N6-AMP-lysine intermediate is the Lys-127. Arg-148 is a binding site for NAD(+). Residues 170-205 are disordered; it reads ELTPLPLAGGAGGGPLDDSGSAPTPDPSRRREGKWN. NAD(+)-binding residues include Glu-215, Lys-347, and Lys-371. Residues Cys-463, Cys-466, Cys-481, and Cys-487 each coordinate Zn(2+). The BRCT domain maps to 656 to 736; the sequence is TLDSPVAGKT…GWAEIVAAAG (81 aa).

The protein belongs to the NAD-dependent DNA ligase family. LigA subfamily. Mg(2+) is required as a cofactor. It depends on Mn(2+) as a cofactor.

The catalysed reaction is NAD(+) + (deoxyribonucleotide)n-3'-hydroxyl + 5'-phospho-(deoxyribonucleotide)m = (deoxyribonucleotide)n+m + AMP + beta-nicotinamide D-nucleotide.. Its function is as follows. DNA ligase that catalyzes the formation of phosphodiester linkages between 5'-phosphoryl and 3'-hydroxyl groups in double-stranded DNA using NAD as a coenzyme and as the energy source for the reaction. It is essential for DNA replication and repair of damaged DNA. The polypeptide is DNA ligase (Erythrobacter litoralis (strain HTCC2594)).